We begin with the raw amino-acid sequence, 367 residues long: Homeobox protein Nkx-6.1 (367 aa).

Residues 36-133 (YPAAYPPLPA…SSSSSSSASA (98 aa)) are disordered. Low complexity-rich tracts occupy residues 48-59 (PSSSSSSSSSSS), 78-91 (GGLS…QQLS), and 110-133 (ASGA…SASA). The tract at residues 102–268 (LSRPSMPVAS…KYLAGPERAR (167 aa)) is repressor domain. Position 189 is an asymmetric dimethylarginine (R189). Positions 236-295 (RKHTRPTFSGQQIFALEKTFEQTKYLAGPERARLAYSLGMTESQVKVWFQNRRTKWRKKH) form a DNA-binding region, homeobox. Positions 294–367 (KHAAEMATAK…LHASEPESSS (74 aa)) are disordered. Residues 304 to 317 (KKQDSETERLKGAS) show a composition bias toward basic and acidic residues. The segment at 306 to 367 (QDSETERLKG…LHASEPESSS (62 aa)) is involved in DNA-binding.

In terms of tissue distribution, pancreatic beta cells.

The protein localises to the nucleus. Its function is as follows. Transcription factor which binds to specific A/T-rich DNA sequences in the promoter regions of a number of genes. Involved in the development of insulin-producing beta cells in the islets of Langerhans at the secondary transition. Together with NKX2-2 and IRX3 acts to restrict the generation of motor neurons to the appropriate region of the neural tube. Belongs to the class II proteins of neuronal progenitor factors, which are induced by SHH signals. This chain is Homeobox protein Nkx-6.1 (NKX6-1), found in Homo sapiens (Human).